Reading from the N-terminus, the 204-residue chain is Protein Nef (204 aa).

The interval 1-33 is disordered; the sequence is MGGKWSKRRAEGWQTIRERMRRAEPAEPAADGV. G2 is lipidated: N-myristoyl glycine; by host. S6 carries the post-translational modification Phosphoserine; by host. Residues 8–25 show a composition bias toward basic and acidic residues; sequence RRAEGWQTIRERMRRAEP. The interval 63-66 is acidic; interacts with host PACS1 and PACS2; stabilizes the interaction of NEF/MHC-I with host AP1M1; necessary for MHC-I internalization; it reads EEGE. An SH3-binding; interaction with Src family tyrosine kinases region spans residues 70–79; it reads PVRPQVPLRP. The PxxP; stabilizes the interaction of NEF/MHC-I with host AP1M1; necessary for MHC-I internalization signature appears at 73-76; sequence PQVP. The interval 109–125 is mediates dimerization, Nef-PTE1 interaction; it reads DILDLWVYHTQGFFPDW. Residues 149 to 179 are binding to ATP6V1H; it reads VEPDEGENNREDNSLLHPANQHGVEDSERQV. The Dileucine internalization motif; necessary for CD4 internalization signature appears at 163-164; it reads LL. The Diacidic; necessary for CD4 internalization motif lies at 173-174; it reads ED.

It belongs to the lentivirus primate group Nef protein family. In terms of assembly, monomer; cytosolic form. Homodimer; membrane bound form. Interacts with Nef associated p21-activated kinase (PAK2); this interaction activates PAK2. Associates with the Nef-MHC-I-AP1 complex; this complex is required for MHC-I internalization. Interacts (via C-terminus) with host PI3-kinase. Interacts with host PACS1; this interaction seems to be weak. Interacts with host PACS2. Interacts with host LCK and MAPK3; these interactions inhibit the kinase activity of the latter. Interacts with host ATP6V1H; this interaction may play a role in CD4 endocytosis. Associates with the CD4-Nef-AP2 complex; this complex is required for CD4 internalization. Interacts with host AP2 subunit alpha and AP2 subunit sigma2. Interacts with TCR-zeta chain; this interaction up-regulates the Fas ligand (FasL) surface expression. Interacts with host HCK, LYN, and SRC; these interactions activate the Src family kinases. Interacts with MAP3K5; this interaction inhibits the Fas and TNFR-mediated death signals. Interacts with beta-COP and PTE1. Interacts with human RACK1; this increases Nef phosphorylation by PKC. Interacts with TP53; this interaction decreases the half-life of TP53, protecting the infected cell against p53-mediated apoptosis. Post-translationally, the virion-associated Nef proteins are cleaved by the viral protease to release the soluble C-terminal core protein. Nef is probably cleaved concomitantly with viral structural proteins on maturation of virus particles. Myristoylated. In terms of processing, phosphorylated on serine residues, probably by host PKCdelta and theta.

The protein resides in the host cell membrane. The protein localises to the virion. It localises to the secreted. It is found in the host Golgi apparatus membrane. Its function is as follows. Factor of infectivity and pathogenicity, required for optimal virus replication. Alters numerous pathways of T-lymphocyte function and down-regulates immunity surface molecules in order to evade host defense and increase viral infectivity. Alters the functionality of other immunity cells, like dendritic cells, monocytes/macrophages and NK cells. Functionally, in infected CD4(+) T-lymphocytes, down-regulates the surface MHC-I, mature MHC-II, CD4, CD28, CCR5 and CXCR4 molecules. Mediates internalization and degradation of host CD4 through the interaction of with the cytoplasmic tail of CD4, the recruitment of AP-2 (clathrin adapter protein complex 2), internalization through clathrin coated pits, and subsequent transport to endosomes and lysosomes for degradation. Diverts host MHC-I molecules to the trans-Golgi network-associated endosomal compartments by an endocytic pathway to finally target them for degradation. MHC-I down-regulation may involve AP-1 (clathrin adapter protein complex 1) or possibly Src family kinase-ZAP70/Syk-PI3K cascade recruited by PACS2. In consequence infected cells are masked for immune recognition by cytotoxic T-lymphocytes. Decreasing the number of immune receptors also prevents reinfection by more HIV particles (superinfection). Down-regulates host SERINC3 and SERINC5 thereby excluding these proteins from the viral particles. Virion infectivity is drastically higher when SERINC3 or SERINC5 are excluded from the viral envelope, because these host antiviral proteins impair the membrane fusion event necessary for subsequent virion penetration. In terms of biological role, bypasses host T-cell signaling by inducing a transcriptional program nearly identical to that of anti-CD3 cell activation. Interaction with TCR-zeta chain up-regulates the Fas ligand (FasL). Increasing surface FasL molecules and decreasing surface MHC-I molecules on infected CD4(+) cells send attacking cytotoxic CD8+ T-lymphocytes into apoptosis. Plays a role in optimizing the host cell environment for viral replication without causing cell death by apoptosis. Protects the infected cells from apoptosis in order to keep them alive until the next virus generation is ready to strike. Inhibits the Fas and TNFR-mediated death signals by blocking MAP3K5/ASK1. Decreases the half-life of TP53, protecting the infected cell against p53-mediated apoptosis. Inhibits the apoptotic signals regulated by the Bcl-2 family proteins through the formation of a Nef/PI3-kinase/PAK2 complex that leads to activation of PAK2 and induces phosphorylation of host BAD. Its function is as follows. Extracellular Nef protein targets CD4(+) T-lymphocytes for apoptosis by interacting with CXCR4 surface receptors. The polypeptide is Protein Nef (Human immunodeficiency virus type 1 group M subtype B (strain 89.6) (HIV-1)).